Consider the following 472-residue polypeptide: UDP-N-acetylmuramate--L-alanine ligase (472 aa).

Residue 122–128 coordinates ATP; that stretch reads GTHGKTT.

The protein belongs to the MurCDEF family.

Its subcellular location is the cytoplasm. The enzyme catalyses UDP-N-acetyl-alpha-D-muramate + L-alanine + ATP = UDP-N-acetyl-alpha-D-muramoyl-L-alanine + ADP + phosphate + H(+). The protein operates within cell wall biogenesis; peptidoglycan biosynthesis. Its function is as follows. Cell wall formation. The polypeptide is UDP-N-acetylmuramate--L-alanine ligase (Thermobifida fusca (strain YX)).